We begin with the raw amino-acid sequence, 279 residues long: MMTQMNYTGKVKRVAIIANGKYQSKRVASKLFSVFKDDPDFYLSKKNPDIVISIGGDGMLLSAFHMYEKELDKVRFVGIHTGHLGFYTDYRDFEVDKLIDNLRKDKGEQISYPILKVAITLDDGRVVKARALNEATVKRIEKTMVADVIINHVKFESFRGDGISVSTPTGSTAYNKSLGGAVLHPTIEALQLTEISSLNNRVFRTLGSSIIIPKKDKIELVPKRLGIYTISIDNKTYQLKNVTKVEYFIDDEKIHFVSSPSHTSFWERVKDAFIGEIDS.

Aspartate 57 serves as the catalytic Proton acceptor. Residues 57 to 58 (DG), 133 to 134 (NE), arginine 159, aspartate 161, and 172 to 177 (TAYNKS) contribute to the NAD(+) site.

The protein belongs to the NAD kinase family. The cofactor is a divalent metal cation.

The protein localises to the cytoplasm. It catalyses the reaction NAD(+) + ATP = ADP + NADP(+) + H(+). Functionally, involved in the regulation of the intracellular balance of NAD and NADP, and is a key enzyme in the biosynthesis of NADP. Catalyzes specifically the phosphorylation on 2'-hydroxyl of the adenosine moiety of NAD to yield NADP. The chain is NAD kinase from Streptococcus pyogenes serotype M2 (strain MGAS10270).